Reading from the N-terminus, the 79-residue chain is Dermaseptin-S8 (79 aa).

Residues 1 to 22 (MDILKKSLFLVLFLGLVSLSIC) form the signal peptide. The propeptide occupies 23–45 (EEEKRENEDEEKQEDDEQSEMKR). Residue Gln-76 is modified to Glutamine amide. Residues 78-79 (AQ) constitute a propeptide that is removed on maturation.

Belongs to the frog skin active peptide (FSAP) family. Dermaseptin subfamily. Expressed by the skin glands.

The protein resides in the secreted. In terms of biological role, potent antimicrobial peptide with activity against bacteria, fungi and protozoa. Probably acts by disturbing membrane functions with its amphipathic structure. This is Dermaseptin-S8 from Phyllomedusa sauvagei (Sauvage's leaf frog).